The following is a 179-amino-acid chain: NADH-quinone oxidoreductase subunit B (179 aa).

Positions 35, 36, 100, and 129 each coordinate [4Fe-4S] cluster.

It belongs to the complex I 20 kDa subunit family. As to quaternary structure, NDH-1 is composed of 14 different subunits. Subunits NuoB, C, D, E, F, and G constitute the peripheral sector of the complex. [4Fe-4S] cluster serves as cofactor.

The protein localises to the cell inner membrane. The enzyme catalyses a quinone + NADH + 5 H(+)(in) = a quinol + NAD(+) + 4 H(+)(out). NDH-1 shuttles electrons from NADH, via FMN and iron-sulfur (Fe-S) centers, to quinones in the respiratory chain. Couples the redox reaction to proton translocation (for every two electrons transferred, four hydrogen ions are translocated across the cytoplasmic membrane), and thus conserves the redox energy in a proton gradient. In Aquifex aeolicus (strain VF5), this protein is NADH-quinone oxidoreductase subunit B.